The sequence spans 414 residues: Tetraspanning orphan receptor (414 aa).

The Cytoplasmic segment spans residues 1–28; the sequence is MPRASALLTSDPRHQFTCCLCLHVRTGT. A helical transmembrane segment spans residues 29–49; it reads IIFGITQIIIQLIFISFLFLM. The Extracellular segment spans residues 50 to 166; sequence TFNPRLFPED…EIKIRQFSPY (117 aa). A helical membrane pass occupies residues 167–187; the sequence is IAVCVTTFSLAFCCFMVHGAI. At 188-194 the chain is on the cytoplasmic side; that stretch reads TRQPTHL. Residues 195–215 traverse the membrane as a helical segment; it reads LPFFFIQVFDLIICLIHILGF. The Extracellular segment spans residues 216 to 241; it reads MSSTSDIRLMIHTKTGPIYIKSTGLA. A helical transmembrane segment spans residues 242-262; that stretch reads FIILSISCMMLAFKAYCLGMV. Residues 263 to 414 lie on the Cytoplasmic side of the membrane; that stretch reads WDCYKYLMLN…TSTPSNVHPC (152 aa). The interval 306–328 is disordered; sequence LTGNLDSANESNTRAHPDPVTYD.

In terms of assembly, interacts (via N-terminal extracellular domain) with human C2a. Phosphorylated on tyrosine residues.

Its subcellular location is the cell membrane. In terms of biological role, cell surface receptor that binds to human complement C2a protein. This results in inhibition of the classical and lectin pathways of complement activation, probably due to interference with binding of C2a to C4b and interference with cleavage by C1 or MASP2 such that C3 convertase cannot be formed. This infers resistance to complement-mediated cell lysis, allowing parasite survival and infection. This is Tetraspanning orphan receptor from Schistosoma japonicum (Blood fluke).